A 274-amino-acid chain; its full sequence is NH(3)-dependent NAD(+) synthetase (274 aa).

46-53 (GISGGQDS) is a binding site for ATP. Residue aspartate 52 coordinates Mg(2+). Arginine 140 is a binding site for deamido-NAD(+). Threonine 160 is an ATP binding site. Glutamate 165 lines the Mg(2+) pocket. Residues lysine 173 and aspartate 180 each contribute to the deamido-NAD(+) site. Positions 189 and 211 each coordinate ATP. 260 to 261 (HK) serves as a coordination point for deamido-NAD(+).

It belongs to the NAD synthetase family. As to quaternary structure, homodimer.

It carries out the reaction deamido-NAD(+) + NH4(+) + ATP = AMP + diphosphate + NAD(+) + H(+). The protein operates within cofactor biosynthesis; NAD(+) biosynthesis; NAD(+) from deamido-NAD(+) (ammonia route): step 1/1. In terms of biological role, catalyzes the ATP-dependent amidation of deamido-NAD to form NAD. Uses ammonia as a nitrogen source. The protein is NH(3)-dependent NAD(+) synthetase of Pectobacterium atrosepticum (strain SCRI 1043 / ATCC BAA-672) (Erwinia carotovora subsp. atroseptica).